A 671-amino-acid polypeptide reads, in one-letter code: DNA ligase (671 aa).

Residues Asp31–Asp35, Ser80–Leu81, and Glu110 each bind NAD(+). Catalysis depends on Lys112, which acts as the N6-AMP-lysine intermediate. The NAD(+) site is built by Arg133, Glu167, Lys283, and Lys307. 4 residues coordinate Zn(2+): Cys401, Cys404, Cys419, and Cys424. The BRCT domain occupies Glu587–Glu671.

This sequence belongs to the NAD-dependent DNA ligase family. LigA subfamily. The cofactor is Mg(2+). Mn(2+) serves as cofactor.

The catalysed reaction is NAD(+) + (deoxyribonucleotide)n-3'-hydroxyl + 5'-phospho-(deoxyribonucleotide)m = (deoxyribonucleotide)n+m + AMP + beta-nicotinamide D-nucleotide.. DNA ligase that catalyzes the formation of phosphodiester linkages between 5'-phosphoryl and 3'-hydroxyl groups in double-stranded DNA using NAD as a coenzyme and as the energy source for the reaction. It is essential for DNA replication and repair of damaged DNA. This chain is DNA ligase, found in Listeria innocua serovar 6a (strain ATCC BAA-680 / CLIP 11262).